A 239-amino-acid chain; its full sequence is MAKLGLNVDHVATVRQARGGMEPDPVTAAALGELAGAEGITIHLREDRRHIQDRDLEILRRTVKTKLNLEMAATQEMVRIALRTKPEQVTLVPEKRQELTTEGGLDVILNLKAITDAVKRLRDGGIVVSLFVDPDQEQIKAANKSGADYIEIHTGAYADAPDWPSQKRQLEEIDAAIKLASKVGMGVNAGHGINYVNIKPLAALGGIEEYNIGHSIMARAILVGMDRAVKDMVELIKYA.

N7 contacts 3-amino-2-oxopropyl phosphate. A 1-deoxy-D-xylulose 5-phosphate-binding site is contributed by 9–10 (DH). A 3-amino-2-oxopropyl phosphate-binding site is contributed by R18. H43 acts as the Proton acceptor in catalysis. Positions 45 and 50 each coordinate 1-deoxy-D-xylulose 5-phosphate. The active-site Proton acceptor is E70. T100 lines the 1-deoxy-D-xylulose 5-phosphate pocket. H191 serves as the catalytic Proton donor. Residues G192 and 213 to 214 (GH) each bind 3-amino-2-oxopropyl phosphate.

It belongs to the PNP synthase family. Homooctamer; tetramer of dimers.

The protein resides in the cytoplasm. It carries out the reaction 3-amino-2-oxopropyl phosphate + 1-deoxy-D-xylulose 5-phosphate = pyridoxine 5'-phosphate + phosphate + 2 H2O + H(+). Its pathway is cofactor biosynthesis; pyridoxine 5'-phosphate biosynthesis; pyridoxine 5'-phosphate from D-erythrose 4-phosphate: step 5/5. Functionally, catalyzes the complicated ring closure reaction between the two acyclic compounds 1-deoxy-D-xylulose-5-phosphate (DXP) and 3-amino-2-oxopropyl phosphate (1-amino-acetone-3-phosphate or AAP) to form pyridoxine 5'-phosphate (PNP) and inorganic phosphate. In Pelobacter propionicus (strain DSM 2379 / NBRC 103807 / OttBd1), this protein is Pyridoxine 5'-phosphate synthase.